A 230-amino-acid polypeptide reads, in one-letter code: Ribonuclease 3 (230 aa).

The region spanning 6–135 (TTELKERYGI…FLGALYLDQK (130 aa)) is the RNase III domain. Glu-48 serves as a coordination point for Mg(2+). The active site involves Asp-52. Mg(2+) contacts are provided by Asp-121 and Glu-124. Glu-124 is an active-site residue. In terms of domain architecture, DRBM spans 161 to 230 (DHKTQLQEVL…AERALKSIPQ (70 aa)).

Belongs to the ribonuclease III family. Homodimer. The cofactor is Mg(2+).

It is found in the cytoplasm. The enzyme catalyses Endonucleolytic cleavage to 5'-phosphomonoester.. In terms of biological role, digests double-stranded RNA. Involved in the processing of primary rRNA transcript to yield the immediate precursors to the large and small rRNAs (23S and 16S). Processes some mRNAs, and tRNAs when they are encoded in the rRNA operon. Processes pre-crRNA and tracrRNA of type II CRISPR loci if present in the organism. This is Ribonuclease 3 from Enterococcus faecalis (strain ATCC 700802 / V583).